A 389-amino-acid chain; its full sequence is S-adenosylmethionine synthase (389 aa).

His-16 provides a ligand contact to ATP. Mg(2+) is bound at residue Asp-18. Residue Glu-44 participates in K(+) binding. Positions 57 and 100 each coordinate L-methionine. The flexible loop stretch occupies residues 100 to 110; the sequence is QSPDIAQGVDE. ATP is bound by residues 167-169, 233-234, Asp-242, 248-249, Ala-265, and Lys-269; these read DAK, RF, and RK. Asp-242 contacts L-methionine. Residue Lys-273 coordinates L-methionine.

This sequence belongs to the AdoMet synthase family. As to quaternary structure, homotetramer; dimer of dimers. The cofactor is Mg(2+). It depends on K(+) as a cofactor.

Its subcellular location is the cytoplasm. It catalyses the reaction L-methionine + ATP + H2O = S-adenosyl-L-methionine + phosphate + diphosphate. Its pathway is amino-acid biosynthesis; S-adenosyl-L-methionine biosynthesis; S-adenosyl-L-methionine from L-methionine: step 1/1. In terms of biological role, catalyzes the formation of S-adenosylmethionine (AdoMet) from methionine and ATP. The overall synthetic reaction is composed of two sequential steps, AdoMet formation and the subsequent tripolyphosphate hydrolysis which occurs prior to release of AdoMet from the enzyme. This chain is S-adenosylmethionine synthase, found in Acidithiobacillus ferrooxidans (strain ATCC 23270 / DSM 14882 / CIP 104768 / NCIMB 8455) (Ferrobacillus ferrooxidans (strain ATCC 23270)).